Reading from the N-terminus, the 594-residue chain is Elongation factor 4 (594 aa).

The 183-residue stretch at 2–184 (KNIRNFSIIA…TIVAKVPAPE (183 aa)) folds into the tr-type G domain. Residues 14-19 (DHGKST) and 131-134 (NKID) each bind GTP.

Belongs to the TRAFAC class translation factor GTPase superfamily. Classic translation factor GTPase family. LepA subfamily.

The protein localises to the cell inner membrane. The catalysed reaction is GTP + H2O = GDP + phosphate + H(+). Its function is as follows. Required for accurate and efficient protein synthesis under certain stress conditions. May act as a fidelity factor of the translation reaction, by catalyzing a one-codon backward translocation of tRNAs on improperly translocated ribosomes. Back-translocation proceeds from a post-translocation (POST) complex to a pre-translocation (PRE) complex, thus giving elongation factor G a second chance to translocate the tRNAs correctly. Binds to ribosomes in a GTP-dependent manner. In Francisella tularensis subsp. holarctica (strain FTNF002-00 / FTA), this protein is Elongation factor 4.